The sequence spans 107 residues: Integration host factor subunit alpha (107 aa).

It belongs to the bacterial histone-like protein family. As to quaternary structure, heterodimer of an alpha and a beta chain.

In terms of biological role, this protein is one of the two subunits of integration host factor, a specific DNA-binding protein that functions in genetic recombination as well as in transcriptional and translational control. This Bartonella tribocorum (strain CIP 105476 / IBS 506) protein is Integration host factor subunit alpha.